The following is a 797-amino-acid chain: MQDGNFLLSALQPEAGVCSLALPSDLQLDRRGAEGPEAERLRAARVQEQVRARLLQLGQQPRHNGAAEPEPEAETARGTSRGQYHTLQAGFSSRSQGLSGDKTSGFRPIAKPAYSPASWSSRSAVDLSCSRRLSSAHNGGSAFGAAGYGGAQPTPPMPTRPVSFHERGGVGSRADYDTLSLRSLRLGPGGLDDRYSLVSEQLEPAATSTYRAFAYERQASSSSSRAGGLDWPEATEVSPSRTIRAPAVRTLQRFQSSHRSRGVGGAVPGAVLEPVARAPSVRSLSLSLADSGHLPDVHGFNSYGSHRTLQRLSSGFDDIDLPSAVKYLMASDPNLQVLGAAYIQHKCYSDAAAKKQARSLQAVPRLVKLFNHANQEVQRHATGAMRNLIYDNADNKLALVEENGIFELLRTLREQDDELRKNVTGILWNLSSSDHLKDRLARDTLEQLTDLVLSPLSGAGGPPLIQQNASEAEIFYNATGFLRNLSSASQATRQKMRECHGLVDALVTSINHALDAGKCEDKSVENAVCVLRNLSYRLYDEMPPSALQRLEGRGRRDLAGAPPGEVVGCFTPQSRRLRELPLAADALTFAEVSKDPKGLEWLWSPQIVGLYNRLLQRCELNRHTTEAAAGALQNITAGDRRWAGVLSRLALEQERILNPLLDRVRTADHHQLRSLTGLIRNLSRNARNKDEMSTKVVSHLIEKLPGSVGEKSPPAEVLVNIIAVLNNLVVASPIAARDLLYFDGLRKLIFIKKKRDSPDSEKSSRAASSLLANLWQYNKLHRDFRAKGYRKEDFLGP.

Residues 56 to 82 (QLGQQPRHNGAAEPEPEAETARGTSRG) are disordered. Omega-N-methylarginine is present on R81. 3 positions are modified to phosphoserine: S123, S180, and S183. Phosphotyrosine; by SRC is present on Y195. S238 and S240 each carry phosphoserine. T250 carries the post-translational modification Phosphothreonine. R261 carries the omega-N-methylarginine modification. Positions 283–288 (SLSLSL) are required for interaction with SFN. A phosphoserine mark is found at S285, S313, S314, and S331. The interval 294-724 (LPDVHGFNSY…AEVLVNIIAV (431 aa)) is required for interaction with GSK3B. ARM repeat units follow at residues 305–348 (SHRT…HKCY), 351–390 (AAAK…NLIY), 393–432 (ADNK…NLSS), 449–487 (TDLV…NLSS), 491–536 (ATRQ…NLSY), 596–637 (PKGL…NITA), 645–684 (VLSR…NLSR), and 689–730 (KDEM…NLVV). Positions 516–797 (AGKCEDKSVE…GYRKEDFLGP (282 aa)) are required for binding to PKP2 mRNA.

This sequence belongs to the beta-catenin family. Found in a complex composed of CDH1, RAP1A and PKP3; PKP3 acts as a scaffold protein within the complex, the complex is required for CDH1 localization to mature desmosome cell junctions. Interacts with FXR1; the interaction facilitates the binding of PKP3 to PKP2 mRNA. Interacts (via ARM repeats) with GSK3B; the interaction may be involved in PKP3 protein degradation. Interacts with hyperphosphorylated and hypophosphorylated RB1; the interaction inhibits RB1 interaction with and repression of the transcription factor E2F1, potentially via sequestering RB1 to the cytoplasm. Interacts with CDKN1A; the interaction sequesters CDKN1A to the cytoplasm thereby repressing its role as an inhibitor of CDK4- and CDK6-driven RB1 phosphorylation. Interacts (via N-terminus) with SFN; the interaction maintains the cytoplasmic pool of PKP3, facilitates PKP3 exchange at desmosomes and restricts PKP3 localization to existing desmosome cell junctions. Interacts (via N-terminus) with JUP; the interaction is required for PKP3 localization to desmosome cell-cell junctions. Phosphorylated at Ser-285 when localized to the cytoplasm, PKP3 at desmosome cell junctions is not phosphorylated. Phosphorylation at Try-195 by SRC is induced by reactive oxygen species and potentially acts as a release mechanism from desmosome cell-cell junctions. As to expression, expressed in the epidermis of the skin, in squamous non-cornifying epithelial cells in the vagina, single layer epithelia of the duodenum and pancreas acini and non-epithelial dendritic reticulum cells of lymph node follicles (at protein level). In terms of tissue distribution, expressed in the oral cavity mucosa, epidermis and small intestine epithelium (at protein level). Expressed in the oral cavity mucosa and epithelial cells of the crypts and villi in the small intestine (at protein level). Expressed in the epidermis with more abundant expression found in the basal and low spinous cells (at protein level).

The protein resides in the nucleus. Its subcellular location is the cell junction. The protein localises to the desmosome. It is found in the cytoplasm. It localises to the cell membrane. The protein resides in the adherens junction. Functionally, a component of desmosome cell-cell junctions which are required for positive regulation of cellular adhesion. Required for the localization of DSG2, DSP and PKP2 to mature desmosome junctions. May also play a role in the maintenance of DSG3 protein abundance in keratinocytes. Required for the formation of DSP-containing desmosome precursors in the cytoplasm during desmosome assembly. Also regulates the accumulation of CDH1 to mature desmosome junctions, via cAMP-dependent signaling and its interaction with activated RAP1A. Positively regulates the stabilization of PKP2 mRNA and therefore protein abundance, via its interaction with FXR1, may also regulate the protein abundance of DSP via the same mechanism. May also regulate the protein abundance of the desmosome component PKP1. Required for the organization of desmosome junctions at intercellular borders between basal keratinocytes of the epidermis, as a result plays a role in maintenance of the dermal barrier and regulation of the dermal inflammatory response. Required during epidermal keratinocyte differentiation for cell adherence at tricellular cell-cell contacts, via regulation of the timely formation of adherens junctions and desmosomes in a calcium-dependent manner, and may also play a role in the organization of the intracellular actin fiber belt. Acts as a negative regulator of the inflammatory response in hematopoietic cells of the skin and intestine, via modulation of proinflammatory cytokine production. Important for epithelial barrier maintenance in the intestine to reduce intestinal permeability, thereby plays a role in protection from intestinal-derived endotoxemia. Required for the development of hair follicles, via a role in the regulation of inner root sheaf length, correct alignment and anterior-posterior polarity of hair follicles. Promotes proliferation and cell-cycle G1/S phase transition of keratinocytes. Promotes E2F1-driven transcription of G1/S phase promoting genes by acting to release E2F1 from its inhibitory interaction with RB1, via sequestering RB1 and CDKN1A to the cytoplasm and thereby increasing CDK4- and CDK6-driven phosphorylation of RB1. May act as a scaffold protein to facilitate MAPK phosphorylation of RPS6KA protein family members and subsequently promote downstream EGFR signaling. May play a role in the positive regulation of transcription of Wnt-mediated TCF-responsive target genes. This Homo sapiens (Human) protein is Plakophilin-3 (PKP3).